Reading from the N-terminus, the 820-residue chain is MLRLGLCAAALLCVCRPGAVRADCWLIEGDKGYVWLAICSQNQPPYETIPQHINSTVHDLRLNENKLKAVLYSSLNRFGNLTDLNLTKNEISYIEDGAFLGQSSLQVLQLGYNKLSNLTEGMLRGMSRLQFLFVQHNLIEVVTPTAFSECPSLISIDLSSNRLSRLDGATFASLASLMVCELAGNPFNCECDLFGFLAWLVVFNNVTKNYDRLQCESPREFAGYPLLVPRPYHSLNAITVLQAKCRNGSLPARPVSHPTPYSTDAQREPDENSGFNPDEILSVEPPASSTTDASAGPAIKLHHVTFTSATLVVIIPHPYSKMYILVQYNNSYFSDVMTLKNKKEIVTLDKLRAHTEYTFCVTSLRNSRRFNHTCLTFTTRDPVPGDLAPSTSTTTHYIMTILGCLFGMVIVLGAVYYCLRKRRMQEEKQKSVNVKKTILEMRYGADVDAGSIVHAAQKLGEPPVLPVSRMASIPSMIGEKLPTAKGLEAGLDTPKVATKGNYIEVRTGAGGDGLARPEDDLPDLENGQGSAAEISTIAKEVDKVNQIINNCIDALKLDSASFLGGGSSSGDPELAFECQSLPAAAAASSATGPGALERPSFLSPPYKESSHHPLQRQLSADAAVTRKTCSVSSSGSIKSAKVFSLDVPDHPAATGLAKGDSKYIEKGSPLNSPLDRLPLVPAGSGGGSGGGGGIHHLEVKPAYHCSEHRHSFPALYYEEGADSLSQRVSFLKPLTRSKRDSTYSQLSPRHYYSGYSSSPEYSSESTHKIWERFRPYKKHHREEVYMAAGHALRKKVQFAKDEDLHDILDYWKGVSAQQKL.

The signal sequence occupies residues 1–22 (MLRLGLCAAALLCVCRPGAVRA). The Extracellular portion of the chain corresponds to 23–397 (DCWLIEGDKG…APSTSTTTHY (375 aa)). N54 carries N-linked (GlcNAc...) asparagine glycosylation. LRR repeat units follow at residues 56–77 (TVHDLRLNENKLKAVLYSSLNR), 80–101 (NLTDLNLTKNEISYIEDGAFLG), 104–125 (SLQVLQLGYNKLSNLTEGMLRG), 128–149 (RLQFLFVQHNLIEVVTPTAFSE), and 152–173 (SLISIDLSSNRLSRLDGATFAS). N80, N85, and N117 each carry an N-linked (GlcNAc...) asparagine glycan. Residues 185-247 (NPFNCECDLF…ITVLQAKCRN (63 aa)) enclose the LRRCT domain. N-linked (GlcNAc...) asparagine glycans are attached at residues N205 and N247. A disordered region spans residues 250-294 (LPARPVSHPTPYSTDAQREPDENSGFNPDEILSVEPPASSTTDAS). The Fibronectin type-III domain occupies 292–379 (DASAGPAIKL…FNHTCLTFTT (88 aa)). The helical transmembrane segment at 398 to 418 (IMTILGCLFGMVIVLGAVYYC) threads the bilayer. The Cytoplasmic segment spans residues 419–820 (LRKRRMQEEK…WKGVSAQQKL (402 aa)). Disordered stretches follow at residues 508–527 (GAGGDGLARPEDDLPDLENG) and 589–612 (SATGPGALERPSFLSPPYKESSHH). S619, S668, and S672 each carry phosphoserine. A disordered region spans residues 654-677 (TGLAKGDSKYIEKGSPLNSPLDRL).

As to quaternary structure, interacts with PPP1CA.

It localises to the membrane. Its function is as follows. Inhibits phosphatase activity of protein phosphatase 1 (PP1) complexes. The chain is Protein phosphatase 1 regulatory subunit 29 (ELFN2) from Homo sapiens (Human).